The primary structure comprises 124 residues: Small ribosomal subunit protein uS12 (124 aa).

The disordered stretch occupies residues Met-1–Leu-24. At Asp-89 the chain carries 3-methylthioaspartic acid.

This sequence belongs to the universal ribosomal protein uS12 family. Part of the 30S ribosomal subunit. Contacts proteins S8 and S17. May interact with IF1 in the 30S initiation complex.

In terms of biological role, with S4 and S5 plays an important role in translational accuracy. Functionally, interacts with and stabilizes bases of the 16S rRNA that are involved in tRNA selection in the A site and with the mRNA backbone. Located at the interface of the 30S and 50S subunits, it traverses the body of the 30S subunit contacting proteins on the other side and probably holding the rRNA structure together. The combined cluster of proteins S8, S12 and S17 appears to hold together the shoulder and platform of the 30S subunit. The sequence is that of Small ribosomal subunit protein uS12 from Borrelia hermsii (strain HS1 / DAH).